Here is a 164-residue protein sequence, read N- to C-terminus: HTH-type transcriptional regulator IscR (164 aa).

The 130-residue stretch at 2–131 (RLTSKGRYAV…NNITLDELVN (130 aa)) folds into the HTH rrf2-type domain. Positions 28 to 51 (LADISERQGISLSYLEQLFSRLRK) form a DNA-binding region, H-T-H motif. 3 residues coordinate [2Fe-2S] cluster: C92, C98, and C104.

It depends on [2Fe-2S] cluster as a cofactor.

In terms of biological role, regulates the transcription of several operons and genes involved in the biogenesis of Fe-S clusters and Fe-S-containing proteins. This Pectobacterium carotovorum subsp. carotovorum (strain PC1) protein is HTH-type transcriptional regulator IscR.